The following is a 139-amino-acid chain: GSK3-beta interaction protein (139 aa).

The segment at 1–22 (METDCNPMELSSMSGFEEGSEL) is disordered. The tract at residues 41 to 45 (VNDVL) is required for PRKAR2A interaction; contributes to a protective effect against H(2)O(2)-induced apoptosis. The segment at 115 to 139 (SPAYREAFGNALLQRLEALKRDGQS) is interaction with GSK3B and acts as a GSK3B inhibitor.

Belongs to the GSKIP family. As to quaternary structure, forms a complex composed of PRKAR2A or PRKAR2B, GSK3B and GSKIP through GSKIP interaction; facilitates PKA-induced phosphorylation of GSK3B leading to GSK3B inactivation; recruits DNM1L through GSK3B for PKA-mediated phosphorylation of DNM1L; promotes beta-catenin degradation through GSK3B-induced phosphorylation of beta-catenin; stabilizes beta-catenin and enhances Wnt-induced signaling through PKA-induced phosphorylation of beta-catenin. Interacts with GSK3B; induces GSK3B-mediated phosphorylation of GSKIP and inhibits GSK3B kinase activity. In terms of processing, phosphorylated by GSK3B.

It localises to the cytoplasm. Its subcellular location is the nucleus. In terms of biological role, A-kinase anchoring protein for GSK3B and PKA that regulates or facilitates their kinase activity towards their targets. The ternary complex enhances Wnt-induced signaling by facilitating the GSK3B- and PKA-induced phosphorylation of beta-catenin leading to beta-catenin degradation and stabilization respectively. Upon cAMP activation, the ternary complex contributes to neuroprotection against oxidative stress-induced apoptosis by facilitating the PKA-induced phosphorylation of DML1 and PKA-induced inactivation of GSK3B. During neurite outgrowth promotes neuron proliferation; while increases beta-catenin-induced transcriptional activity through GSK3B kinase activity inhibition, reduces N-cadherin level to promote cell cycle progression. May play a role in cleft palate formation and is required for postnatal life through modulation of the activity of GSK3B during development. The chain is GSK3-beta interaction protein from Macaca fascicularis (Crab-eating macaque).